Reading from the N-terminus, the 406-residue chain is S-adenosylmethionine synthase (406 aa).

Residue His17 coordinates ATP. Residue Asp19 participates in Mg(2+) binding. Residue Glu45 participates in K(+) binding. The L-methionine site is built by Glu58 and Gln101. Residues 101–111 (QSAEINQGVAR) are flexible loop. Residues 178–180 (DGK), Asp258, 264–265 (RK), Ala281, and Lys285 each bind ATP. Position 258 (Asp258) interacts with L-methionine. Lys289 contributes to the L-methionine binding site.

This sequence belongs to the AdoMet synthase family. In terms of assembly, homotetramer; dimer of dimers. Mg(2+) is required as a cofactor. The cofactor is K(+).

Its subcellular location is the cytoplasm. It carries out the reaction L-methionine + ATP + H2O = S-adenosyl-L-methionine + phosphate + diphosphate. The protein operates within amino-acid biosynthesis; S-adenosyl-L-methionine biosynthesis; S-adenosyl-L-methionine from L-methionine: step 1/1. In terms of biological role, catalyzes the formation of S-adenosylmethionine (AdoMet) from methionine and ATP. The overall synthetic reaction is composed of two sequential steps, AdoMet formation and the subsequent tripolyphosphate hydrolysis which occurs prior to release of AdoMet from the enzyme. The chain is S-adenosylmethionine synthase from Bifidobacterium longum subsp. infantis (strain ATCC 15697 / DSM 20088 / JCM 1222 / NCTC 11817 / S12).